A 420-amino-acid chain; its full sequence is MKLLVVGSGGREHAIAKKLLESKDVEKVFVAPGNDGMTLDGLELVNISISEHYKLIDFAKTNDVAWTFIGPDDALAAGIVDDFNQAGLKAFGPTRAAAELEWSKDFAKEIMVKYGVPTATYGTFSDFEEAKAYIEKHGAPIVVKADGLALGKGVVVAETVEQAVEAAHEMLLDNKFGDSGARVVIEEFLEGEEFSLFAFVNGDKFYIMPTAQDHKRAYDGDKGPNTGGMGAYAPVPHLPQSVVDTAVDTIVKPVLEGVIKEGRPYLGVLYAGLILTADGPKVIEFNARFGDPETQIILPRLTSDFAQNITDILDSKEPNIMWTDKGVTLGVVVASKGYPLDYERGVELPAKTEGDVITYYAGAKFAENSRALLSNGGRVYMLVTTADTVKEAQASIYQELYQQKIEGLFYRTDIGSKAIK.

Positions 108–314 constitute an ATP-grasp domain; the sequence is KEIMVKYGVP…FAQNITDILD (207 aa). 134 to 195 is an ATP binding site; sequence IEKHGAPIVV…EEFLEGEEFS (62 aa). Positions 284 and 286 each coordinate Mg(2+).

The protein belongs to the GARS family. Mg(2+) serves as cofactor. It depends on Mn(2+) as a cofactor.

The catalysed reaction is 5-phospho-beta-D-ribosylamine + glycine + ATP = N(1)-(5-phospho-beta-D-ribosyl)glycinamide + ADP + phosphate + H(+). It functions in the pathway purine metabolism; IMP biosynthesis via de novo pathway; N(1)-(5-phospho-D-ribosyl)glycinamide from 5-phospho-alpha-D-ribose 1-diphosphate: step 2/2. In Streptococcus pneumoniae serotype 4 (strain ATCC BAA-334 / TIGR4), this protein is Phosphoribosylamine--glycine ligase.